Here is a 275-residue protein sequence, read N- to C-terminus: MKRLLFLFLLAGILINNHALQHNETIDLKKLAKIVLPPAYQTRVIGGRVTTNAKLGGYLVAMRYFNNFICGGTLIHELIVLTAAHCFEDRAEKEAWSVDGGISRLSEKGIRRQVKRFIKSAQFKMVTMNMDVAVVLLNRPMVGKNIGTLSLCSTALTPGQTMDVSGWGMTNPDDEGPGHMLRTVSVPVIEKRICREAYRESVSISDSMFCASVLGKKDACTYDSGGPLVYEKQVCGIVSFGIGCASRRYPGVYTDVHYVKPFIVKGIKALLSRSR.

The first 19 residues, 1-19, serve as a signal peptide directing secretion; sequence MKRLLFLFLLAGILINNHA. N-linked (GlcNAc...) asparagine glycosylation is present at Asn-23. The Peptidase S1 domain occupies 44–268; the sequence is VIGGRVTTNA…VKPFIVKGIK (225 aa). Cys-70 and Cys-86 are disulfide-bonded. Catalysis depends on charge relay system residues His-85 and Asp-131. Intrachain disulfides connect Cys-194–Cys-210 and Cys-220–Cys-244. Ser-224 functions as the Charge relay system in the catalytic mechanism.

The protein belongs to the peptidase S1 family. Undergoes cleavage in the male during mating with a cleaved product detected in the ejaculatory duct and/or bulb of males by 8-10 minutes after the start of mating. Further cleavage occurs in the mated female. As to expression, produced in the male accessory glands and secreted into seminal fluid.

The protein localises to the secreted. Its function is as follows. Seminal fluid protease which is required for cleavage and probably also activation of the metalloprotease Semp1. Also required for a number of female post-mating responses independent of Semp1 including egg laying and sperm usage. The sequence is that of Seminase from Drosophila melanogaster (Fruit fly).